Reading from the N-terminus, the 623-residue chain is Negative regulator of PDR1-mediated fluconazole resistance JJJ1 (623 aa).

Positions 4–70 (CYYDLLEVRS…QERAWYDSHK (67 aa)) constitute a J domain. The segment at 363–387 (YDCFICKKSFKSEKQLENHIKTKLH) adopts a C2H2-type zinc-finger fold. 3 disordered regions span residues 448-476 (QSSV…KLSN), 499-581 (GADN…NDAK), and 599-623 (SHIQ…KKNK). A compositionally biased stretch (acidic residues) spans 453-466 (DSEDFTDDNNDTED). Residues 499–508 (GADNSETQNA) show a composition bias toward polar residues. Residues 525–538 (ELTRILRELEESKT) are compositionally biased toward basic and acidic residues. 2 stretches are compositionally biased toward basic residues: residues 553–564 (KKKTKAKKKKNK) and 612–623 (KVKKGKRSKKNK).

It localises to the nucleus. Acts as a negative regulator of fluconazole resistance, primarily through down-regulation of the ABC transporter gene CDR1 via inactivation of the PDR1 transcriptional pathway. This chain is Negative regulator of PDR1-mediated fluconazole resistance JJJ1, found in Candida glabrata (strain ATCC 2001 / BCRC 20586 / JCM 3761 / NBRC 0622 / NRRL Y-65 / CBS 138) (Yeast).